Consider the following 559-residue polypeptide: Urocanate hydratase (559 aa).

NAD(+) is bound by residues 53 to 54 (GG), Gln-131, 177 to 179 (GMG), Glu-197, Arg-202, 243 to 244 (NA), 264 to 268 (QTSAH), 274 to 275 (YL), and Tyr-323. The active site involves Cys-411. Gly-493 is a binding site for NAD(+).

It belongs to the urocanase family. NAD(+) is required as a cofactor.

Its subcellular location is the cytoplasm. The enzyme catalyses 4-imidazolone-5-propanoate = trans-urocanate + H2O. It functions in the pathway amino-acid degradation; L-histidine degradation into L-glutamate; N-formimidoyl-L-glutamate from L-histidine: step 2/3. In terms of biological role, catalyzes the conversion of urocanate to 4-imidazolone-5-propionate. The sequence is that of Urocanate hydratase from Pseudomonas aeruginosa (strain LESB58).